The chain runs to 544 residues: Chaperonin GroEL 2 (544 aa).

Residues 29-32 (TLGP), lysine 50, 86-90 (DGTTT), glycine 414, and aspartate 494 contribute to the ATP site.

This sequence belongs to the chaperonin (HSP60) family. Forms a cylinder of 14 subunits composed of two heptameric rings stacked back-to-back. Interacts with the co-chaperonin GroES.

Its subcellular location is the cytoplasm. The catalysed reaction is ATP + H2O + a folded polypeptide = ADP + phosphate + an unfolded polypeptide.. Functionally, together with its co-chaperonin GroES, plays an essential role in assisting protein folding. The GroEL-GroES system forms a nano-cage that allows encapsulation of the non-native substrate proteins and provides a physical environment optimized to promote and accelerate protein folding. The chain is Chaperonin GroEL 2 from Psychromonas ingrahamii (strain DSM 17664 / CCUG 51855 / 37).